We begin with the raw amino-acid sequence, 200 residues long: Protein GrpE (200 aa).

Positions 1 to 10 (MQEKDSKDVT) are enriched in basic and acidic residues. The segment at 1–57 (MQEKDSKDVTMEDEETIASQEEIEVEGNSEESSKEEESNNSEISDENLSEENLKLKD) is disordered. Positions 11-29 (MEDEETIASQEEIEVEGNS) are enriched in acidic residues.

Belongs to the GrpE family. Homodimer.

It localises to the cytoplasm. In terms of biological role, participates actively in the response to hyperosmotic and heat shock by preventing the aggregation of stress-denatured proteins, in association with DnaK and GrpE. It is the nucleotide exchange factor for DnaK and may function as a thermosensor. Unfolded proteins bind initially to DnaJ; upon interaction with the DnaJ-bound protein, DnaK hydrolyzes its bound ATP, resulting in the formation of a stable complex. GrpE releases ADP from DnaK; ATP binding to DnaK triggers the release of the substrate protein, thus completing the reaction cycle. Several rounds of ATP-dependent interactions between DnaJ, DnaK and GrpE are required for fully efficient folding. The protein is Protein GrpE of Clostridium acetobutylicum (strain ATCC 824 / DSM 792 / JCM 1419 / IAM 19013 / LMG 5710 / NBRC 13948 / NRRL B-527 / VKM B-1787 / 2291 / W).